A 146-amino-acid chain; its full sequence is MEILGFTVMGGGSPAWIEVPEKSKSAFWELMRRKVHRYVIFKIDDRREEIVVEKTGAPWESYDDFTASLPADAVYDLDFVSDDNCRKSKIFFISWSPSLSCIRAKTIYAVWRNQFRHELDGVHFEIQATDPDDMDLEVLRGRANRT.

The ADF-H domain occupies 14 to 144 (PAWIEVPEKS…DLEVLRGRAN (131 aa)).

Belongs to the actin-binding proteins ADF family.

Its function is as follows. Actin-depolymerizing protein. Severs actin filaments (F-actin) and binds to actin monomers. The protein is Putative actin-depolymerizing factor 8 (ADF8) of Oryza sativa subsp. japonica (Rice).